A 259-amino-acid polypeptide reads, in one-letter code: Hydroxyethylthiazole kinase (259 aa).

Residue M37 coordinates substrate. Residues R113 and T158 each contribute to the ATP site. G185 lines the substrate pocket.

This sequence belongs to the Thz kinase family. Mg(2+) is required as a cofactor.

The catalysed reaction is 5-(2-hydroxyethyl)-4-methylthiazole + ATP = 4-methyl-5-(2-phosphooxyethyl)-thiazole + ADP + H(+). Its pathway is cofactor biosynthesis; thiamine diphosphate biosynthesis; 4-methyl-5-(2-phosphoethyl)-thiazole from 5-(2-hydroxyethyl)-4-methylthiazole: step 1/1. Its function is as follows. Catalyzes the phosphorylation of the hydroxyl group of 4-methyl-5-beta-hydroxyethylthiazole (THZ). The sequence is that of Hydroxyethylthiazole kinase from Helicobacter pylori (strain Shi470).